A 318-amino-acid chain; its full sequence is COP9 signalosome complex subunit 6 (318 aa).

In terms of domain architecture, MPN spans 32–165; sequence VALHPLVILN…VSVYESVIDI (134 aa).

This sequence belongs to the peptidase M67A family. CSN6 subfamily. As to quaternary structure, component of the CSN complex, probably composed of cops1, cops2, cops3, cops4, cops5, cops6, cops7, cops8 and cops9.

It is found in the cytoplasm. The protein localises to the nucleus. In terms of biological role, component of the COP9 signalosome complex (CSN), a complex involved in various cellular and developmental processes. The CSN complex is an essential regulator of the ubiquitin (Ubl) conjugation pathway by mediating the deneddylation of the cullin subunits of E3 ligase complexes, leading to modify the Ubl ligase activity. The polypeptide is COP9 signalosome complex subunit 6 (cops6) (Xenopus laevis (African clawed frog)).